Consider the following 429-residue polypeptide: Glycogenin-1 (429 aa).

Residues leucine 8, threonine 10, asparagine 11, tyrosine 14, and arginine 76 each coordinate UDP. UDP-alpha-D-glucose contacts are provided by leucine 8, threonine 10, asparagine 11, tyrosine 14, arginine 76, lysine 85, aspartate 101, alanine 102, aspartate 103, asparagine 132, serine 133, aspartate 159, aspartate 162, and glutamine 163. Residues aspartate 101, alanine 102, and aspartate 103 each contribute to the UDP site. Residue aspartate 101 participates in Mn(2+) binding. Aspartate 103 provides a ligand contact to Mn(2+). O-linked (Glc...) tyrosine glycosylation is present at tyrosine 194. UDP is bound by residues histidine 211, glycine 214, and lysine 217. Residue histidine 211 participates in Mn(2+) binding. The UDP-alpha-D-glucose site is built by glycine 214 and lysine 217. Disordered regions lie at residues 254-274 (VFPS…HPKI) and 300-338 (SYDT…QTPH). 2 stretches are compositionally biased toward basic and acidic residues: residues 263–274 (EHRSHSADHPKI) and 309–338 (DSHR…QTPH).

It belongs to the glycosyltransferase 8 family. Glycogenin subfamily. As to quaternary structure, forms a heterooctamer with one molecule of gyg-1 bound to each protomer of the gys-1 homotetramer. The N-terminus of gys-1 is involved in interprotomer contacts with gyg-1. The interaction with gys-1 is required for glycogen production but is not required for gys-1 intrinsic activity. Requires Mn(2+) as cofactor. Self-glycosylated by the transfer of glucose residues from UDP-glucose to itself, forming an alpha-1,4-glycan of around 10 residues attached to Tyr-194.

The protein localises to the cytoplasm. Its subcellular location is the nucleus. The enzyme catalyses L-tyrosyl-[glycogenin] + UDP-alpha-D-glucose = alpha-D-glucosyl-L-tyrosyl-[glycogenin] + UDP + H(+). It catalyses the reaction [1,4-alpha-D-glucosyl](n)-L-tyrosyl-[glycogenin] + UDP-alpha-D-glucose = [1,4-alpha-D-glucosyl](n+1)-L-tyrosyl-[glycogenin] + UDP + H(+). It functions in the pathway glycan biosynthesis; glycogen biosynthesis. Its function is as follows. Self-glucosylating initiator of glycogen synthesis. It catalyzes the formation of a short alpha (1,4)-glucosyl chain covalently attached via a glucose 1-O-tyrosyl linkage to internal tyrosine residues and these chains act as primers for the elongation reaction catalyzed by glycogen synthase. The polypeptide is Glycogenin-1 (Caenorhabditis elegans).